Reading from the N-terminus, the 471-residue chain is Glutamate--tRNA ligase (471 aa).

The short motif at 9–19 (PSPTGYLHVGG) is the 'HIGH' region element. Cysteine 98, cysteine 100, cysteine 125, and histidine 127 together coordinate Zn(2+). Residues 237–241 (KLSKR) carry the 'KMSKS' region motif. Lysine 240 lines the ATP pocket.

The protein belongs to the class-I aminoacyl-tRNA synthetase family. Glutamate--tRNA ligase type 1 subfamily. Monomer. Requires Zn(2+) as cofactor.

It is found in the cytoplasm. It catalyses the reaction tRNA(Glu) + L-glutamate + ATP = L-glutamyl-tRNA(Glu) + AMP + diphosphate. In terms of biological role, catalyzes the attachment of glutamate to tRNA(Glu) in a two-step reaction: glutamate is first activated by ATP to form Glu-AMP and then transferred to the acceptor end of tRNA(Glu). The protein is Glutamate--tRNA ligase of Escherichia coli O1:K1 / APEC.